The chain runs to 1265 residues: Nestin (1265 aa).

Residues M1–E16 are head. The coil 1A stretch occupies residues E17–L52. Residues E17–I324 enclose the IF rod domain. Residues K53 to A64 are linker 1. The segment at Q65–M160 is coil 1B. The segment at Q161 to P183 is linker 12. The tract at residues D184–N203 is coil 2A. The linker 2 stretch occupies residues Y204–K206. Residues Q207 to I324 are coil 2B. The interval D325–E1265 is tail. The span at P383–T402 shows a compositional bias: polar residues. Disordered stretches follow at residues P383–S521, F667–E830, H863–Q1073, A1093–S1116, and I1232–E1265. Residues E403–E418 show a composition bias toward basic and acidic residues. The span at D422–K441 shows a compositional bias: polar residues. The segment covering A444–D459 has biased composition (basic and acidic residues). Residues L479–T496 are compositionally biased toward polar residues. 2 stretches are compositionally biased toward acidic residues: residues E508–V520 and L730–E739. Basic and acidic residues-rich tracts occupy residues Y784 to E796, E803 to T819, and H863 to D897. Over residues F901–T910 the composition is skewed to polar residues. Positions E911 to N935 are enriched in basic and acidic residues. Residues S943 to L956 are compositionally biased toward low complexity. Residues P1015–V1043 show a composition bias toward polar residues. Residues S1061–K1070 show a composition bias toward basic and acidic residues. Polar residues-rich tracts occupy residues S1105–S1116 and P1242–D1251. The segment covering D1252–E1265 has biased composition (acidic residues).

It belongs to the intermediate filament family. In terms of assembly, forms homodimers and homotetramers in vitro. In mixtures with other intermediate filament proteins such as vimentin and alpha-internexin, preferentially forms heterodimers. In terms of tissue distribution, widely expressed throughout the developing nervous system at 24 hours post-fertilization (hpf). As development progresses, expression becomes restricted to proliferative zones of the developing and postembryonic central nervous system. In the peripheral nervous system, expressed in the cranial ganglia. Also expressed in mesodermal muscle precursor cells and in cranial mesenchymal tissue.

In terms of biological role, promotes the disassembly of phosphorylated vimentin intermediate filaments (IF) during mitosis and may play a role in the trafficking and distribution of IF proteins and other cellular factors to daughter cells during progenitor cell division. Required for survival, renewal and mitogen-stimulated proliferation of neural progenitor cells. Required for brain and eye development. The chain is Nestin (nes) from Danio rerio (Zebrafish).